The chain runs to 358 residues: Probable dual-specificity RNA methyltransferase RlmN 1 (358 aa).

The Radical SAM core domain maps to 101 to 326 (MQAGGTLCIS…REKGFYTLLR (226 aa)). C108 and C337 are disulfide-bonded. 3 residues coordinate [4Fe-4S] cluster: C115, C119, and C122. S-adenosyl-L-methionine-binding positions include 162–163 (GE), S194, 218–220 (SLN), and N294. The active-site S-methylcysteine intermediate is the C337.

The protein belongs to the radical SAM superfamily. RlmN family. [4Fe-4S] cluster serves as cofactor.

The protein resides in the cytoplasm. The enzyme catalyses adenosine(2503) in 23S rRNA + 2 reduced [2Fe-2S]-[ferredoxin] + 2 S-adenosyl-L-methionine = 2-methyladenosine(2503) in 23S rRNA + 5'-deoxyadenosine + L-methionine + 2 oxidized [2Fe-2S]-[ferredoxin] + S-adenosyl-L-homocysteine. It catalyses the reaction adenosine(37) in tRNA + 2 reduced [2Fe-2S]-[ferredoxin] + 2 S-adenosyl-L-methionine = 2-methyladenosine(37) in tRNA + 5'-deoxyadenosine + L-methionine + 2 oxidized [2Fe-2S]-[ferredoxin] + S-adenosyl-L-homocysteine. Specifically methylates position 2 of adenine 2503 in 23S rRNA and position 2 of adenine 37 in tRNAs. This Protochlamydia amoebophila (strain UWE25) protein is Probable dual-specificity RNA methyltransferase RlmN 1.